Here is a 397-residue protein sequence, read N- to C-terminus: MSESVHTNTSLWSKGMKAVIVAQFLSAFGDNALLFATLALLKAQFYPEWSQPILQMVFVGAYILFAPFVGQVADSFAKGRVMMFANGLKLLGAASICFGINPFLGYTLVGVGAAAYSPAKYGILGELTTGSKLVKANGLMEASTIAAILLGSVAGGVLADWHILVALAACALAYGGAVVANIYIPKLAAARPGQSWNLISMTRSFLNACTSLWRNGETRFSLVGTSLFWGAGVTLRFLLVLWVPVALGITDNATPTYLNAMVAIGIVVGAGAAAKLVTLETVSRCMPAGILIGVVVLIFSLQHELLPAYALLMLIGVLGGFFVVPLNALLQERGKKSVGAGNAIAVQNLGENSAMLLMLGIYSLAVMVGIPVVPIGIGFGALFALAITALWIWQRRH.

Over 1–17 (MSESVHTNTSLWSKGMK) the chain is Periplasmic. The helical transmembrane segment at 18-38 (AVIVAQFLSAFGDNALLFATL) threads the bilayer. The Cytoplasmic segment spans residues 39–52 (ALLKAQFYPEWSQP). The helical transmembrane segment at 53–73 (ILQMVFVGAYILFAPFVGQVA) threads the bilayer. The Periplasmic portion of the chain corresponds to 74–90 (DSFAKGRVMMFANGLKL). A helical transmembrane segment spans residues 91–111 (LGAASICFGINPFLGYTLVGV). Residues 112-144 (GAAAYSPAKYGILGELTTGSKLVKANGLMEAST) lie on the Cytoplasmic side of the membrane. Residues 145–165 (IAAILLGSVAGGVLADWHILV) form a helical membrane-spanning segment. A166 is a topological domain (periplasmic). A helical transmembrane segment spans residues 167 to 187 (LAACALAYGGAVVANIYIPKL). Residues 188–226 (AAARPGQSWNLISMTRSFLNACTSLWRNGETRFSLVGTS) are Cytoplasmic-facing. A helical transmembrane segment spans residues 227-247 (LFWGAGVTLRFLLVLWVPVAL). The Periplasmic portion of the chain corresponds to 248–256 (GITDNATPT). The chain crosses the membrane as a helical span at residues 257–277 (YLNAMVAIGIVVGAGAAAKLV). Residues 278–280 (TLE) are Cytoplasmic-facing. A helical transmembrane segment spans residues 281-301 (TVSRCMPAGILIGVVVLIFSL). The Periplasmic portion of the chain corresponds to 302–304 (QHE). Residues 305-325 (LLPAYALLMLIGVLGGFFVVP) form a helical membrane-spanning segment. Over 326–343 (LNALLQERGKKSVGAGNA) the chain is Cytoplasmic. Residues 344-364 (IAVQNLGENSAMLLMLGIYSL) form a helical membrane-spanning segment. Residues 365–366 (AV) lie on the Periplasmic side of the membrane. The helical transmembrane segment at 367–387 (MVGIPVVPIGIGFGALFALAI) threads the bilayer. At 388–397 (TALWIWQRRH) the chain is on the cytoplasmic side.

The protein belongs to the major facilitator superfamily. LplT (TC 2.A.1.42) family.

It localises to the cell inner membrane. Functionally, catalyzes the facilitated diffusion of 2-acyl-glycero-3-phosphoethanolamine (2-acyl-GPE) into the cell. The sequence is that of Lysophospholipid transporter LplT from Escherichia coli O6:K15:H31 (strain 536 / UPEC).